A 116-amino-acid polypeptide reads, in one-letter code: Nitrogenase-stabilizing/protective protein NifW (116 aa).

The protein belongs to the NifW family. In terms of assembly, homotrimer; associates with NifD.

May protect the nitrogenase Fe-Mo protein from oxidative damage. This is Nitrogenase-stabilizing/protective protein NifW from Rhodopseudomonas palustris (strain ATCC BAA-98 / CGA009).